The sequence spans 252 residues: MTATTQPFVYRYPGLIPGILRKRYKRFLADIELASGEIVTAHCPNTGPMTGICELGAPVMLSKSDNPKRKLAYTWEMIQLPTPEPTWIGVNTALPNRVIKAMLLAKQIPELADHYDTVRPEVRYGTENKSRIDFLLTGEGRSPLYVEVKNTTWTKGKLALFPDTETTRGQKHLQELIDIVPAAKAVMLYFINRGDCTRFAPGDSKDPKYGELFRQAIAAGIQILPCRFAVSPEGICYLGLAPWESTEISGVG.

Belongs to the SfsA family.

The chain is Sugar fermentation stimulation protein homolog from Picosynechococcus sp. (strain ATCC 27264 / PCC 7002 / PR-6) (Agmenellum quadruplicatum).